A 152-amino-acid polypeptide reads, in one-letter code: Transcriptional regulator MraZ (152 aa).

SpoVT-AbrB domains lie at 5–52 (VTSI…PLHE) and 81–124 (ATEC…QDKQ).

The protein belongs to the MraZ family. Forms oligomers.

Its subcellular location is the cytoplasm. It is found in the nucleoid. This Actinobacillus pleuropneumoniae serotype 5b (strain L20) protein is Transcriptional regulator MraZ.